Here is a 322-residue protein sequence, read N- to C-terminus: Phosphatidylglycerol--prolipoprotein diacylglyceryl transferase (322 aa).

The next 3 membrane-spanning stretches (helical) occupy residues 23–43 (VYPI…AFFW), 53–73 (FFAL…LWFV), and 97–117 (GLSI…YIYF). R143 is a binding site for a 1,2-diacyl-sn-glycero-3-phospho-(1'-sn-glycerol). 2 consecutive transmembrane segments (helical) span residues 191–211 (PLFL…VWII) and 250–270 (LAAM…EIWA).

This sequence belongs to the Lgt family.

It is found in the cell membrane. The catalysed reaction is L-cysteinyl-[prolipoprotein] + a 1,2-diacyl-sn-glycero-3-phospho-(1'-sn-glycerol) = an S-1,2-diacyl-sn-glyceryl-L-cysteinyl-[prolipoprotein] + sn-glycerol 1-phosphate + H(+). Its pathway is protein modification; lipoprotein biosynthesis (diacylglyceryl transfer). Catalyzes the transfer of the diacylglyceryl group from phosphatidylglycerol to the sulfhydryl group of the N-terminal cysteine of a prolipoprotein, the first step in the formation of mature lipoproteins. This is Phosphatidylglycerol--prolipoprotein diacylglyceryl transferase from Mycoplasmopsis pulmonis (strain UAB CTIP) (Mycoplasma pulmonis).